Here is a 360-residue protein sequence, read N- to C-terminus: Actin-like protein MamK (360 aa).

ATP contacts are provided by residues K22, 33–34 (TS), and D89. E156 serves as a coordination point for Mg(2+). Residues 177 to 179 (AGT), 231 to 235 (KEQFS), and G302 contribute to the ATP site.

It belongs to the FtsA/MreB family. MamK subfamily. Forms cytoplasmic filaments. Interacts with MamJ. Forms filaments in the absence of other magnetosome proteins and in E.coli. Filament formation in vitro requires ATP, GTP or a non-hydrolyzable ATP analog.

The protein resides in the cytoplasm. The protein localises to the cytoskeleton. It catalyses the reaction ATP + H2O = ADP + phosphate + H(+). Filament dynamics depend partially on MamJ. Protein with ATPase activity which forms dynamic cytoplasmic filaments that are involved in sorting, concatenating and/or correctly positioning of magnetosomes in the cell. Not absolutely necessary for assembly of short chains. Filaments grow from the both cell poles towards midcell, and are probably disassembled at the other end of the cell, a process known as treadmilling. Polymerizes in the presence of ATP, GTP or a non-hydrolyzable ATP analog. Required for correct segregation and positioning of magnetosomes following cell division. The chain is Actin-like protein MamK from Magnetospirillum gryphiswaldense (strain DSM 6361 / JCM 21280 / NBRC 15271 / MSR-1).